The following is a 310-amino-acid chain: Methionyl-tRNA formyltransferase (310 aa).

110 to 113 contributes to the (6S)-5,6,7,8-tetrahydrofolate binding site; the sequence is SVLP.

It belongs to the Fmt family.

It carries out the reaction L-methionyl-tRNA(fMet) + (6R)-10-formyltetrahydrofolate = N-formyl-L-methionyl-tRNA(fMet) + (6S)-5,6,7,8-tetrahydrofolate + H(+). In terms of biological role, attaches a formyl group to the free amino group of methionyl-tRNA(fMet). The formyl group appears to play a dual role in the initiator identity of N-formylmethionyl-tRNA by promoting its recognition by IF2 and preventing the misappropriation of this tRNA by the elongation apparatus. The polypeptide is Methionyl-tRNA formyltransferase (Mycolicibacterium vanbaalenii (strain DSM 7251 / JCM 13017 / BCRC 16820 / KCTC 9966 / NRRL B-24157 / PYR-1) (Mycobacterium vanbaalenii)).